The primary structure comprises 238 residues: Chorionic somatomammotropin hormone 2 (238 aa).

The signal sequence occupies residues 1-36 (MAPAPSFRGHQWTYNPVRGSCLLLLLVVSNLLLCQG). His-66 provides a ligand contact to Zn(2+). 4 N-linked (GlcNAc...) asparagine glycosylation sites follow: Asn-70, Asn-92, Asn-146, and Asn-160. Cys-97 and Cys-215 are oxidised to a cystine. A Zn(2+)-binding site is contributed by Asp-224. Cys-232 and Cys-238 are joined by a disulfide.

The protein belongs to the somatotropin/prolactin family.

Its subcellular location is the secreted. This is Chorionic somatomammotropin hormone 2 (CSH2) from Bos taurus (Bovine).